The following is an 800-amino-acid chain: MKLVIVESPAKAKTINKYLGDEFKVIASFGHIRDLPSKKGSVIPDENFSMKYDISEKAGKYVDAIIKDAKKAESVYLATDPDREGESISWHIAEVIKEKNKVKSDDFFKRVAFNEITKKAITHAIENPRKLDNNLVNAQQARRALDYLVGFTLSPLLWRKLPGCKSAGRVQSVALRLICEREDEIERFKSEEYWDISLKMLNSNNELFTAKLTHINDQKLEKFSITNDKEAKDLTEKLKSQNFHVDKIEKKQQKRQPQPPFITSSLQQEAARKLGFSAKKTMQIAQKLYEGVDIGKETIGLITYMRTDGVTLSNDAVDEIRKLINKDYGDKYLPSSPRIYKSKVKNAQEAHEAIRPTNINYIPNDLKEKLEKDYYKLYELIWKRTIACQMENVIMDLVNATLASENKEYLARANGSTIAFDGFYKVYRESIDDEAEEENKMLPPLKEQEHLKTKEIIPNQHFTEPPPRYSEASLVKKLEELGIGRPSTYATILSVLQDRKYVTLEKKRFIPEELGRLVTVFLVGFFKKYVEYDFTAGLENELDEIAAGKLEWKSALGNFWNGFNHNIESVNKQNITEIISYVQQALDYHIFGENKDSKVCPSCKTGELSLKLGKFGAFLACSNYPECNFRKSIVSGNDNNEADGEAKDIVNENKVLGKDKEGIEIYLKKGPYGPYIQYGEQVDSKIKPKRSPLPAGLNQNDITLDMALKLLSLPLKIGNHKESGEEVLVGYGKFGPYIKYMGKFISIPKKYDFLNLSLDDAMKLIEEKLNAIAAKQPNPLNMDEVTNLVDKKIKVKKTKK.

The Toprim domain occupies 1–111; the sequence is MKLVIVESPA…VKSDDFFKRV (111 aa). Mg(2+)-binding residues include Glu7 and Asp80. The region spanning 132–568 is the Topo IA-type catalytic domain; it reads DNNLVNAQQA…FWNGFNHNIE (437 aa). Positions 166–171 are interaction with DNA; the sequence is SAGRVQ. The O-(5'-phospho-DNA)-tyrosine intermediate role is filled by Tyr304. The C4-type zinc-finger motif lies at 600-627; sequence CPSCKTGELSLKLGKFGAFLACSNYPEC.

This sequence belongs to the type IA topoisomerase family. As to quaternary structure, monomer. Mg(2+) serves as cofactor.

It catalyses the reaction ATP-independent breakage of single-stranded DNA, followed by passage and rejoining.. Its function is as follows. Releases the supercoiling and torsional tension of DNA, which is introduced during the DNA replication and transcription, by transiently cleaving and rejoining one strand of the DNA duplex. Introduces a single-strand break via transesterification at a target site in duplex DNA. The scissile phosphodiester is attacked by the catalytic tyrosine of the enzyme, resulting in the formation of a DNA-(5'-phosphotyrosyl)-enzyme intermediate and the expulsion of a 3'-OH DNA strand. The free DNA strand then undergoes passage around the unbroken strand, thus removing DNA supercoils. Finally, in the religation step, the DNA 3'-OH attacks the covalent intermediate to expel the active-site tyrosine and restore the DNA phosphodiester backbone. This Rickettsia bellii (strain RML369-C) protein is DNA topoisomerase 1.